A 2234-amino-acid chain; its full sequence is Bridge-like lipid transfer protein family member 2 (2234 aa).

The first 31 residues, 1–31 (MPLFLSALLVLLLVALSALFLGRWLVVRLAT), serve as a signal peptide directing secretion. The interval 29 to 108 (LATRWCQRKL…LQKVSSLSAP (80 aa)) is transmembrane domain. Ser-563 is modified (phosphoserine). Positions 1496 to 1529 (QMSAKKPKRGIPPSAQVPPHVSTPSFSGRPDKGS) are disordered. Positions 1814 to 1885 (ILHLQEAVRQ…LNILIRCFKD (72 aa)) form a coiled coil. Phosphoserine is present on residues Ser-1846 and Ser-2090.

It belongs to the SABRE family.

The protein localises to the cell membrane. The protein resides in the endoplasmic reticulum membrane. It is found in the mitochondrion membrane. Its function is as follows. Tube-forming lipid transport protein which binds to phosphatidylinositols and affects phosphatidylinositol-4,5-bisphosphate (PtdIns-4,5-P2) distribution. The sequence is that of Bridge-like lipid transfer protein family member 2 (Bltp2) from Mus musculus (Mouse).